The following is a 647-amino-acid chain: MTTNPDIVKQTKNEIHQVTSRVQEKLDSKSTNAVEQNNNSSQASVTKDNKKKAAKRAKKKAAKKKKQSAAASASSTPVEEAQHAQEEQQEQTILQEPGFTQTIVEKDADQVDEPLEPIASSALGTVEPPTDNKPSASTSTAVPTTEARNTSITEPANSPSSSSSSASTKSTATTQSADYVVAEHFAPQRNDEQLGNSPASITSKPATTSAAQPSSKVEENMAKATSQPITTAEKEIPELKPIEPEAIMISKEINTTHDQAAATTTAAVASASTTATAESHAVADGIMNDNVLESIGENVQQETVFEDASDIPHADVIPHTTTVTVEEESPIALGQGGVTHEATTSARASASGIPGAFEEVQQTVQEDLPHPTAETVEIARFAEQPVRAQQPEQYESSVVQEATETVTDVGKGVSSTVKNEVNVPSTIPTESENPVAVGGTTAEHPVQEAVTAPTETAHDFSKETTTASKRVSKHDKASAEKHKVARKPSSTGQEPTTPSTPAKSAQSSKHARRPSKQASAPSSPGTTSAAVPGGKKSAIEAAAPIPTSADTVESKHAAGSGSATTIPSPGSATTKPTPGSATTKPTPVSATEEHAAGTTKPAPAAGATATAENETADGKAQTATDGEAAPKKSWFKRMKKSFGKLFH.

Disordered regions lie at residues 1 to 241 (MTTN…ELKP) and 387 to 647 (RAQQ…KLFH). A compositionally biased stretch (polar residues) spans 29–46 (KSTNAVEQNNNSSQASVT). The span at 49–67 (NKKKAAKRAKKKAAKKKKQ) shows a compositional bias: basic residues. Positions 92-103 (TILQEPGFTQTI) are enriched in polar residues. Residues 134–145 (PSASTSTAVPTT) show a composition bias toward low complexity. Over residues 146–155 (EARNTSITEP) the composition is skewed to polar residues. Residues 156-177 (ANSPSSSSSSASTKSTATTQSA) show a composition bias toward low complexity. Phosphoserine occurs at positions 162 and 165. T168 carries the phosphothreonine modification. Residues 193–215 (QLGNSPASITSKPATTSAAQPSS) are compositionally biased toward polar residues. 2 positions are modified to phosphoserine: S197 and S200. Basic and acidic residues predominate over residues 232–241 (AEKEIPELKP). 3 stretches are compositionally biased toward polar residues: residues 390–406 (QPEQYESSVVQEATETV), 413–432 (VSSTVKNEVNVPSTIPTESE), and 488–508 (PSSTGQEPTTPSTPAKSAQSS). A Phosphoserine modification is found at S396. A phosphoserine mark is found at S489 and S490. T491 carries the phosphothreonine modification. A phosphoserine mark is found at S515, S519, and S523. The segment covering 518-530 (ASAPSSPGTTSAA) has biased composition (low complexity). Over residues 561–589 (GSATTIPSPGSATTKPTPGSATTKPTPVS) the composition is skewed to polar residues. A compositionally biased stretch (low complexity) spans 596–613 (AGTTKPAPAAGATATAEN). The segment covering 633 to 647 (SWFKRMKKSFGKLFH) has biased composition (basic residues).

Has a role in meiosis and sporulation. The chain is Meiotically up-regulated protein C8C9.04 from Schizosaccharomyces pombe (strain 972 / ATCC 24843) (Fission yeast).